A 387-amino-acid polypeptide reads, in one-letter code: Flap endonuclease 1 (387 aa).

Residues 1-104 are N-domain; that stretch reads MGIKGLSQLI…GELEKRKERQ (104 aa). A Mg(2+)-binding site is contributed by Asp-34. Arg-70 lines the DNA pocket. Mg(2+) is bound by residues Asp-86, Glu-158, Glu-160, Asp-179, and Asp-181. The segment at 122–253 is I-domain; it reads KMVMWNKRTT…KKALAMIKKY (132 aa). Residue Glu-158 participates in DNA binding. DNA contacts are provided by Gly-231 and Asp-233. Asp-233 is a binding site for Mg(2+). The disordered stretch occupies residues 332 to 387; it reads SSRGKPTQTRLDGFFTPVASSSTTKKKAPAKKDDKKSATDKKRKAADASTSSKKKK. Residues 338 to 346 are interaction with PCNA; it reads TQTRLDGFF. Over residues 361–371 the composition is skewed to basic and acidic residues; that stretch reads AKKDDKKSATD. Residues 378-387 are compositionally biased toward low complexity; the sequence is DASTSSKKKK.

It belongs to the XPG/RAD2 endonuclease family. FEN1 subfamily. Interacts with PCNA. Three molecules of FEN1 bind to one PCNA trimer with each molecule binding to one PCNA monomer. PCNA stimulates the nuclease activity without altering cleavage specificity. Mg(2+) is required as a cofactor. In terms of processing, phosphorylated. Phosphorylation upon DNA damage induces relocalization to the nuclear plasma.

It localises to the nucleus. The protein resides in the nucleolus. Its subcellular location is the nucleoplasm. It is found in the mitochondrion. Structure-specific nuclease with 5'-flap endonuclease and 5'-3' exonuclease activities involved in DNA replication and repair. During DNA replication, cleaves the 5'-overhanging flap structure that is generated by displacement synthesis when DNA polymerase encounters the 5'-end of a downstream Okazaki fragment. It enters the flap from the 5'-end and then tracks to cleave the flap base, leaving a nick for ligation. Also involved in the long patch base excision repair (LP-BER) pathway, by cleaving within the apurinic/apyrimidinic (AP) site-terminated flap. Acts as a genome stabilization factor that prevents flaps from equilibrating into structures that lead to duplications and deletions. Also possesses 5'-3' exonuclease activity on nicked or gapped double-stranded DNA, and exhibits RNase H activity. Also involved in replication and repair of rDNA and in repairing mitochondrial DNA. The polypeptide is Flap endonuclease 1 (Naegleria gruberi (Amoeba)).